The following is a 537-amino-acid chain: Putative cysteine ligase BshC (537 aa).

A coiled-coil region spans residues 422 to 450; that stretch reads IEKVEGMIEQQRRLNKDLLDEVAGNQNNI.

The protein belongs to the BshC family.

Functionally, involved in bacillithiol (BSH) biosynthesis. May catalyze the last step of the pathway, the addition of cysteine to glucosamine malate (GlcN-Mal) to generate BSH. This Staphylococcus aureus (strain COL) protein is Putative cysteine ligase BshC.